A 128-amino-acid polypeptide reads, in one-letter code: Prokineticin-2 (128 aa).

A signal peptide spans Met-1–Ala-26. Intrachain disulfides connect Cys-33–Cys-45, Cys-39–Cys-57, Cys-44–Cys-106, Cys-67–Cys-114, and Cys-108–Cys-124.

Belongs to the AVIT (prokineticin) family. As to expression, expressed in the SCN and among a few other discrete brain areas, including the islands of Calleja, media l preoptic area of the hypothalamus and the shell of the nucleus accumbens. Highly expressed in testis. In the SCN, expression subjected to high amplitude of circadian oscillation.

Its subcellular location is the secreted. In terms of biological role, may function as an output molecule from the suprachiasmatic nucleus (SCN) that transmits behavioral circadian rhythm. May also function locally within the SCN to synchronize output. Potently contracts gastrointestinal (GI) smooth muscle. The protein is Prokineticin-2 (Prok2) of Mus musculus (Mouse).